A 177-amino-acid polypeptide reads, in one-letter code: Late embryogenesis abundant protein 1 (177 aa).

A disordered region spans residues 1 to 177 (MASHDQSYKA…DKDHFPTNRH (177 aa)). Positions 28–39 (IEDKAQAAKEKA) are enriched in basic and acidic residues. Positions 40-89 (QQAAQTAKDKTSQTAQAAKEKTQQTAQAAKEKTQQTAQAAKDETQQTAQA) are enriched in low complexity. Repeat copies occupy residues 53-63 (TAQAAKEKTQQ), 64-74 (TAQAAKEKTQQ), 75-85 (TAQAAKDETQQ), and 86-96 (TAQAAKDKTQQ). The interval 53–96 (TAQAAKEKTQQTAQAAKEKTQQTAQAAKDETQQTAQAAKDKTQQ) is 4 X 11 AA approximate tandem repeats of T-A-Q-A-A-K-E-K-T-Q-Q. A compositionally biased stretch (basic and acidic residues) spans 90–117 (AKDKTQQTTEATKEKAQDTTGRAREKGS). The segment covering 119-142 (MGQSTKETAQSGKDNSAGFLQQTG) has biased composition (polar residues). Positions 164-177 (NDDKDKDHFPTNRH) are enriched in basic and acidic residues.

It belongs to the LEA type 4 family. In terms of tissue distribution, highest expression is found in seeds. No expression detected in adult tissues.

This chain is Late embryogenesis abundant protein 1, found in Cicer arietinum (Chickpea).